The sequence spans 415 residues: Protein fuzzy homolog (415 aa).

This sequence belongs to the fuzzy family. In terms of assembly, component of the CPLANE (ciliogenesis and planar polarity effectors) complex, composed of INTU, FUZ and WDPCP. Interacts with CPLANE1 and CPLANE2.

Its subcellular location is the cytoplasm. It localises to the cytoskeleton. It is found in the cilium basal body. In terms of biological role, probable planar cell polarity effector involved in cilium biogenesis. Proposed to function as core component of the CPLANE (ciliogenesis and planar polarity effectors) complex involved in the recruitment of peripheral IFT-A proteins to basal bodies. May regulate protein and membrane transport to the cilium. May regulate the morphogenesis of hair follicles which depends on functional primary cilia. Binds phosphatidylinositol 3-phosphate with highest affinity, followed by phosphatidylinositol 4-phosphate and phosphatidylinositol 5-phosphate. The sequence is that of Protein fuzzy homolog (Fuz) from Rattus norvegicus (Rat).